Reading from the N-terminus, the 93-residue chain is Allatostatin C (93 aa).

The first 23 residues, 1–23 (MSSVRNIAALALVLLVLAEWSAA), serve as a signal peptide directing secretion. Residues 24 to 61 (MPTTDKDKERLLNTVDLIDDDGSIETALINYLFTKQIV) constitute a propeptide that is removed on maturation. Residues C83 and C90 are joined by a disulfide bond.

Its subcellular location is the secreted. Its function is as follows. Inhibits juvenile hormone biosynthesis. The chain is Allatostatin C from Camponotus floridanus (Florida carpenter ant).